Reading from the N-terminus, the 375-residue chain is 3-dehydroquinate synthase (375 aa).

NAD(+) contacts are provided by residues 82 to 87 (SGETSK), 116 to 120 (GVVGD), 140 to 141 (TT), Lys-153, and Lys-162. The Zn(2+) site is built by Glu-195, His-259, and His-276.

It belongs to the sugar phosphate cyclases superfamily. Dehydroquinate synthase family. The cofactor is NAD(+). Co(2+) serves as cofactor. It depends on Zn(2+) as a cofactor.

The protein localises to the cytoplasm. It carries out the reaction 7-phospho-2-dehydro-3-deoxy-D-arabino-heptonate = 3-dehydroquinate + phosphate. It participates in metabolic intermediate biosynthesis; chorismate biosynthesis; chorismate from D-erythrose 4-phosphate and phosphoenolpyruvate: step 2/7. Its function is as follows. Catalyzes the conversion of 3-deoxy-D-arabino-heptulosonate 7-phosphate (DAHP) to dehydroquinate (DHQ). The chain is 3-dehydroquinate synthase from Rhodopirellula baltica (strain DSM 10527 / NCIMB 13988 / SH1).